The following is a 307-amino-acid chain: Ribosomal RNA small subunit methyltransferase H (307 aa).

S-adenosyl-L-methionine contacts are provided by residues 33–35 (GGY), Asp51, Phe82, Asp96, and Gln103.

It belongs to the methyltransferase superfamily. RsmH family.

The protein resides in the cytoplasm. The enzyme catalyses cytidine(1402) in 16S rRNA + S-adenosyl-L-methionine = N(4)-methylcytidine(1402) in 16S rRNA + S-adenosyl-L-homocysteine + H(+). Functionally, specifically methylates the N4 position of cytidine in position 1402 (C1402) of 16S rRNA. This chain is Ribosomal RNA small subunit methyltransferase H, found in Rickettsia africae (strain ESF-5).